The sequence spans 112 residues: Putative pterin-4-alpha-carbinolamine dehydratase (112 aa).

The protein belongs to the pterin-4-alpha-carbinolamine dehydratase family.

It carries out the reaction (4aS,6R)-4a-hydroxy-L-erythro-5,6,7,8-tetrahydrobiopterin = (6R)-L-erythro-6,7-dihydrobiopterin + H2O. This chain is Putative pterin-4-alpha-carbinolamine dehydratase, found in Shewanella frigidimarina (strain NCIMB 400).